The chain runs to 503 residues: ATP synthase subunit alpha (503 aa).

ATP is bound at residue 170-177 (GDKQTGKT).

The protein belongs to the ATPase alpha/beta chains family. As to quaternary structure, F-type ATPases have 2 components, CF(1) - the catalytic core - and CF(0) - the membrane proton channel. CF(1) has five subunits: alpha(3), beta(3), gamma(1), delta(1), epsilon(1). CF(0) has three main subunits: a(1), b(2) and c(9-12). The alpha and beta chains form an alternating ring which encloses part of the gamma chain. CF(1) is attached to CF(0) by a central stalk formed by the gamma and epsilon chains, while a peripheral stalk is formed by the delta and b chains.

The protein resides in the cell inner membrane. The catalysed reaction is ATP + H2O + 4 H(+)(in) = ADP + phosphate + 5 H(+)(out). Its function is as follows. Produces ATP from ADP in the presence of a proton gradient across the membrane. The alpha chain is a regulatory subunit. This chain is ATP synthase subunit alpha, found in Helicobacter pylori (strain HPAG1).